The primary structure comprises 417 residues: Tryptophan synthase beta chain (417 aa).

Residue lysine 108 is modified to N6-(pyridoxal phosphate)lysine.

It belongs to the TrpB family. Tetramer of two alpha and two beta chains. It depends on pyridoxal 5'-phosphate as a cofactor.

The catalysed reaction is (1S,2R)-1-C-(indol-3-yl)glycerol 3-phosphate + L-serine = D-glyceraldehyde 3-phosphate + L-tryptophan + H2O. Its pathway is amino-acid biosynthesis; L-tryptophan biosynthesis; L-tryptophan from chorismate: step 5/5. The beta subunit is responsible for the synthesis of L-tryptophan from indole and L-serine. The chain is Tryptophan synthase beta chain (trpB) from Mycobacterium leprae (strain TN).